A 185-amino-acid chain; its full sequence is CASP-like protein SELMODRAFT_413556 (185 aa).

The Cytoplasmic portion of the chain corresponds to 1–89 (MATLPLSLIF…AVTVLFYLAK (89 aa)). The chain crosses the membrane as a helical span at residues 90–110 (LVFGILGLALSIIWLLHIIVF). Residues 111 to 131 (MLVNPPAFPFLNQVFIQLDSA) are Extracellular-facing. A helical transmembrane segment spans residues 132–152 (WGLLGTTAFAIFCYYLIMSVI). Topologically, residues 153-163 (SGEMHSIHPMK) are cytoplasmic. Residues 164–184 (YQGTLMNSFLFNVAIILLCST) form a helical membrane-spanning segment. Residue Arg185 is a topological domain, extracellular.

It belongs to the Casparian strip membrane proteins (CASP) family. In terms of assembly, homodimer and heterodimers.

The protein localises to the cell membrane. The chain is CASP-like protein SELMODRAFT_413556 from Selaginella moellendorffii (Spikemoss).